Reading from the N-terminus, the 249-residue chain is 3-deoxy-manno-octulosonate cytidylyltransferase (249 aa).

The protein belongs to the KdsB family.

The protein localises to the cytoplasm. It catalyses the reaction 3-deoxy-alpha-D-manno-oct-2-ulosonate + CTP = CMP-3-deoxy-beta-D-manno-octulosonate + diphosphate. The protein operates within nucleotide-sugar biosynthesis; CMP-3-deoxy-D-manno-octulosonate biosynthesis; CMP-3-deoxy-D-manno-octulosonate from 3-deoxy-D-manno-octulosonate and CTP: step 1/1. Its pathway is bacterial outer membrane biogenesis; lipopolysaccharide biosynthesis. Activates KDO (a required 8-carbon sugar) for incorporation into bacterial lipopolysaccharide in Gram-negative bacteria. This chain is 3-deoxy-manno-octulosonate cytidylyltransferase, found in Coxiella burnetii (strain RSA 331 / Henzerling II).